Consider the following 217-residue polypeptide: Chorionic somatomammotropin hormone 2 (217 aa).

The signal sequence occupies residues 1-26 (MAAGSRTSLLLAFALLCLPWLQEAGA). Residue His44 coordinates Zn(2+). Cys79 and Cys191 are oxidised to a cystine. Glu200 contributes to the Zn(2+) binding site. A disulfide bridge connects residues Cys208 and Cys215.

The protein belongs to the somatotropin/prolactin family. In terms of assembly, can be found in a monomeric as well as dimeric form.

The protein localises to the secreted. In terms of biological role, produced only during pregnancy and is involved in stimulating lactation, fetal growth and metabolism. Does not interact with GHR but only activates PRLR through zinc-induced dimerization. This is Chorionic somatomammotropin hormone 2 (CSH2) from Homo sapiens (Human).